A 72-amino-acid chain; its full sequence is Osmotically-inducible lipoprotein B (72 aa).

A signal peptide spans 1–23; that stretch reads MFVTSKKMTAAVLAITLAMSLSA. A lipid anchor (N-palmitoyl cysteine) is attached at Cys-24. Cys-24 carries the S-diacylglycerol cysteine lipid modification.

Its subcellular location is the cell membrane. Provides resistance to osmotic stress. May be important for stationary-phase survival. This chain is Osmotically-inducible lipoprotein B (osmB), found in Escherichia coli O157:H7.